The sequence spans 259 residues: MTIKIHTEKDFIKMRAAGKLAAETLDFITDHVKPNVTTNSLNDLCHNFITSHNAIPAPLNYKGFPKSICTSINHVVCHGIPNDKPLKNGDIVNIDVTVILDGWYGDTSRMYYVGDVAIKPKRLIQVTYDAMMKGIEVVRPGAKLGDIGYAIQSYAEKHNYSVVRDYTGHGIGRVFHDKPSILNYGRNGTGLTLKEGMFFTVEPMINAGNYDTILSKLDGWTVTTRDKSLSAQFEHTIGVTKDGFEIFTLSPKKLDYPPY.

Histidine 78 is a binding site for substrate. 3 residues coordinate a divalent metal cation: aspartate 95, aspartate 106, and histidine 169. Histidine 176 lines the substrate pocket. Glutamate 202 contacts a divalent metal cation. Residue tryptophan 220 participates in substrate binding. Glutamate 234 contributes to the a divalent metal cation binding site.

Belongs to the peptidase M24A family. Methionine aminopeptidase type 1 subfamily. As to quaternary structure, monomer. The cofactor is Co(2+). Zn(2+) serves as cofactor. It depends on Mn(2+) as a cofactor. Requires Fe(2+) as cofactor.

The enzyme catalyses Release of N-terminal amino acids, preferentially methionine, from peptides and arylamides.. Removes the N-terminal methionine from nascent proteins. The N-terminal methionine is often cleaved when the second residue in the primary sequence is small and uncharged (Met-Ala-, Cys, Gly, Pro, Ser, Thr, or Val). Requires deformylation of the N(alpha)-formylated initiator methionine before it can be hydrolyzed. This Rickettsia prowazekii (strain Madrid E) protein is Methionine aminopeptidase.